A 367-amino-acid polypeptide reads, in one-letter code: Ferredoxin--NADP reductase 2 (367 aa).

7 residues coordinate FAD: D56, Q64, Y69, V109, F144, D309, and T350.

Belongs to the ferredoxin--NADP reductase type 2 family. In terms of assembly, homodimer. It depends on FAD as a cofactor.

The enzyme catalyses 2 reduced [2Fe-2S]-[ferredoxin] + NADP(+) + H(+) = 2 oxidized [2Fe-2S]-[ferredoxin] + NADPH. The sequence is that of Ferredoxin--NADP reductase 2 from Cupriavidus metallidurans (strain ATCC 43123 / DSM 2839 / NBRC 102507 / CH34) (Ralstonia metallidurans).